The chain runs to 817 residues: LisH domain-containing protein ARMC9 (817 aa).

The 33-residue stretch at 15–47 (SESDLLSMISEYLKFGEFEETARTFEKEVKRKG) folds into the LisH domain. 3 disordered regions span residues 580–605 (SATIPEQEPESDDEEDEDDDDDEEDV), 610–629 (LDKEEVLQPQPKELSGESLL), and 642–817 (KTKR…SNRK). Acidic residues predominate over residues 586 to 605 (QEPESDDEEDEDDDDDEEDV). Polar residues-rich tracts occupy residues 692–715 (SSRPATRTGSRPSTAESIHQTLAT) and 740–750 (GQTTNSVQSYS). Over residues 805–817 (GRPSQQSSQSNRK) the composition is skewed to low complexity.

In terms of tissue distribution, expressed in multiple CNS regions, including the cerebellum, all periventricular regions, and all layers of the retina.

The protein resides in the cytoplasm. The protein localises to the cytoskeleton. Its subcellular location is the cilium basal body. It localises to the cell projection. It is found in the cilium. The protein resides in the microtubule organizing center. The protein localises to the centrosome. Its subcellular location is the centriole. Involved in ciliogenesis. It is required for appropriate acetylation and polyglutamylation of ciliary microtubules, and regulation of cilium length. Acts as a positive regulator of hedgehog (Hh) signaling. The chain is LisH domain-containing protein ARMC9 (armc9) from Danio rerio (Zebrafish).